Reading from the N-terminus, the 1014-residue chain is Isoleucine--tRNA ligase (1014 aa).

The 'HIGH' region signature appears at 48-58 (PTANGRPGIHH). The 'KMSKS' region motif lies at 628–632 (KMSKS). Position 631 (lysine 631) interacts with ATP.

Belongs to the class-I aminoacyl-tRNA synthetase family. IleS type 2 subfamily. In terms of assembly, monomer. Zn(2+) serves as cofactor.

Its subcellular location is the cytoplasm. It carries out the reaction tRNA(Ile) + L-isoleucine + ATP = L-isoleucyl-tRNA(Ile) + AMP + diphosphate. Its function is as follows. Catalyzes the attachment of isoleucine to tRNA(Ile). As IleRS can inadvertently accommodate and process structurally similar amino acids such as valine, to avoid such errors it has two additional distinct tRNA(Ile)-dependent editing activities. One activity is designated as 'pretransfer' editing and involves the hydrolysis of activated Val-AMP. The other activity is designated 'posttransfer' editing and involves deacylation of mischarged Val-tRNA(Ile). This Dehalococcoides mccartyi (strain CBDB1) protein is Isoleucine--tRNA ligase.